Here is a 555-residue protein sequence, read N- to C-terminus: T-complex protein 1 subunit gamma (555 aa).

The segment at 527 to 555 (KKKQAPGSGPSKPTIETEGDADNEQILPD) is disordered.

The protein belongs to the TCP-1 chaperonin family. As to quaternary structure, heterooligomeric complex of about 850 to 900 kDa that forms two stacked rings, 12 to 16 nm in diameter. Interacts with CCT8.

It localises to the cytoplasm. Functionally, molecular chaperone; assists the folding of proteins upon ATP hydrolysis. Known to play a role, in vitro, in the folding of actin and tubulin. This chain is T-complex protein 1 subunit gamma, found in Arabidopsis thaliana (Mouse-ear cress).